We begin with the raw amino-acid sequence, 368 residues long: MSETAKKVIVGMSGGVDSSVSAWLLQQQGYQVEGLFMKNWEEDDGEEYCTAAADLADAQAVCDKLGIELHTVNFAAEYWDNVFELFLAEYKAGRTPNPDILCNKEIKFKAFLEFAAEDLCADYIATGHYVRRAXVDGKSRLLRGLDSNKDQSYFLYTLSHEQIAQSLFPVGELEKPQVRKIAEDLGLVTAKKKDSTGICFIGERKFRKFLGRYLPAQPGKIITVDGDEIGEHQGLMYHTLGQRKGLGIGGTKDGTEEPWYVVDKDVENNILIVAQGHEHPRLMSVGLIAQQLHWVDREPFTGTMRCTVKTRYRQTDIPCTVKALDADRIEVIFDEPVAAVTPGQSAVFYNGEVCLGGGIIEQRLPLPV.

Residues glycine 11 to serine 18 and methionine 37 each bind ATP. The interval asparagine 97–aspartate 99 is interaction with target base in tRNA. Catalysis depends on cysteine 102, which acts as the Nucleophile. A disulfide bond links cysteine 102 and cysteine 199. Residue glycine 127 participates in ATP binding. The interval lysine 149–glutamine 151 is interaction with tRNA. Catalysis depends on cysteine 199, which acts as the Cysteine persulfide intermediate. Positions arginine 311–tyrosine 312 are interaction with tRNA.

It belongs to the MnmA/TRMU family. Interacts with TusE.

The protein resides in the cytoplasm. The enzyme catalyses S-sulfanyl-L-cysteinyl-[protein] + uridine(34) in tRNA + AH2 + ATP = 2-thiouridine(34) in tRNA + L-cysteinyl-[protein] + A + AMP + diphosphate + H(+). Its function is as follows. Catalyzes the 2-thiolation of uridine at the wobble position (U34) of tRNA(Lys), tRNA(Glu) and tRNA(Gln), leading to the formation of s(2)U34, the first step of tRNA-mnm(5)s(2)U34 synthesis. Sulfur is provided by IscS, via a sulfur-relay system. Binds ATP and its substrate tRNAs. The chain is tRNA-specific 2-thiouridylase MnmA from Escherichia coli O6:H1 (strain CFT073 / ATCC 700928 / UPEC).